We begin with the raw amino-acid sequence, 237 residues long: DCN1-like protein 5 (237 aa).

Phosphoserine occurs at positions 9, 41, and 48. In terms of domain architecture, DCUN1 spans 46–232 (FSSKKCLAWF…LLDEFVEWQK (187 aa)).

Part of a complex that contains DCUN1D5, CUL1 and RBX1; this interaction is bridged by CUL1. Interacts (via the DCUN1 domain) with the unneddylated cullins: interacts with CUL1, CUL2, CUL3, CUL4A, CUL4B and CUL5; these interactions promote the cullin neddylation and the identity of the cullin dictates the affinity of the interaction. Interacts (via DCUN1 domain) with UBE2M (N-terminally acetylated form) and probably with UBE2F (N-terminally acetylated form). May also interact with regulators or subunits of cullin-RING ligases such as RBX1, RNF7, ELOB and DDB1; these interactions are bridged by cullins. Interacts with CAND1; this interaction is bridged by cullins and strongly inhibits the neddylation of cullins. These CAND-cullin-DCNL complexes can only be neddylated in the presence of a substrate adapter. Phosphorylation at Ser-41 is independent of cullin's interaction. Phosphorylated in response to both TICAM1 and MYD88 dependent Toll-like receptor (TLR) pathway activation. Phosphorylated in response to IL1B stimulation.

It localises to the nucleus. The protein resides in the cytoplasm. Its subcellular location is the cytoskeleton. The protein localises to the spindle. In terms of biological role, contributes to the neddylation of all cullins by transferring NEDD8 from N-terminally acetylated NEDD8-conjugating E2s enzyme to different cullin C-terminal domain-RBX complexes which is necessary for the activation of cullin-RING E3 ubiquitin ligases (CRLs). May play a role in DNA damage response and may participate in cell proliferation and anchorage-independent cell growth. The protein is DCN1-like protein 5 of Pongo abelii (Sumatran orangutan).